A 664-amino-acid chain; its full sequence is Phosphomethylpyrimidine synthase (664 aa).

2 stretches are compositionally biased toward polar residues: residues 1–10 (MSTEPLSINP) and 17–27 (SATQEPSTSSK). Positions 1 to 37 (MSTEPLSINPLSAKPLSATQEPSTSSKPSRREQRAAA) are disordered. Substrate-binding positions include asparagine 261, methionine 290, tyrosine 319, histidine 355, 375–377 (SRG), 416–419 (DGLR), and glutamate 455. Histidine 459 serves as a coordination point for Zn(2+). Tyrosine 482 serves as a coordination point for substrate. Histidine 523 is a Zn(2+) binding site. Positions 603, 606, and 611 each coordinate [4Fe-4S] cluster.

It belongs to the ThiC family. In terms of assembly, homodimer. [4Fe-4S] cluster serves as cofactor.

It carries out the reaction 5-amino-1-(5-phospho-beta-D-ribosyl)imidazole + S-adenosyl-L-methionine = 4-amino-2-methyl-5-(phosphooxymethyl)pyrimidine + CO + 5'-deoxyadenosine + formate + L-methionine + 3 H(+). The protein operates within cofactor biosynthesis; thiamine diphosphate biosynthesis. Functionally, catalyzes the synthesis of the hydroxymethylpyrimidine phosphate (HMP-P) moiety of thiamine from aminoimidazole ribotide (AIR) in a radical S-adenosyl-L-methionine (SAM)-dependent reaction. This Pectobacterium atrosepticum (strain SCRI 1043 / ATCC BAA-672) (Erwinia carotovora subsp. atroseptica) protein is Phosphomethylpyrimidine synthase.